Consider the following 310-residue polypeptide: uncharacterized protein (310 aa).

Residues 1 to 70 (MAGNSQRRGA…ARGRTDETET (70 aa)) form a disordered region. The segment covering 49–62 (AAKRAKAQQRRPAR) has biased composition (basic residues). 3 residues coordinate S-adenosyl-L-methionine: Gly262, Val282, and Leu291.

The protein belongs to the class IV-like SAM-binding methyltransferase superfamily. RNA methyltransferase TrmH family.

This is an uncharacterized protein from Mycobacterium ulcerans (strain Agy99).